The chain runs to 304 residues: Aspartate carbamoyltransferase catalytic subunit (304 aa).

2 residues coordinate carbamoyl phosphate: arginine 49 and threonine 50. Lysine 77 serves as a coordination point for L-aspartate. Carbamoyl phosphate-binding residues include arginine 99, histidine 127, and glutamine 130. The L-aspartate site is built by arginine 160 and arginine 211. The carbamoyl phosphate site is built by alanine 252 and proline 253.

It belongs to the aspartate/ornithine carbamoyltransferase superfamily. ATCase family. In terms of assembly, heterododecamer (2C3:3R2) of six catalytic PyrB chains organized as two trimers (C3), and six regulatory PyrI chains organized as three dimers (R2).

It carries out the reaction carbamoyl phosphate + L-aspartate = N-carbamoyl-L-aspartate + phosphate + H(+). Its pathway is pyrimidine metabolism; UMP biosynthesis via de novo pathway; (S)-dihydroorotate from bicarbonate: step 2/3. Its function is as follows. Catalyzes the condensation of carbamoyl phosphate and aspartate to form carbamoyl aspartate and inorganic phosphate, the committed step in the de novo pyrimidine nucleotide biosynthesis pathway. This is Aspartate carbamoyltransferase catalytic subunit from Bacillus cereus (strain ATCC 10987 / NRS 248).